A 408-amino-acid polypeptide reads, in one-letter code: 2,3-bisphosphoglycerate-independent phosphoglycerate mutase 1 (408 aa).

This sequence belongs to the BPG-independent phosphoglycerate mutase family. A-PGAM subfamily. As to quaternary structure, monomer. It depends on Mn(2+) as a cofactor.

It catalyses the reaction (2R)-2-phosphoglycerate = (2R)-3-phosphoglycerate. The protein operates within carbohydrate degradation; glycolysis; pyruvate from D-glyceraldehyde 3-phosphate: step 3/5. In terms of biological role, catalyzes the interconversion of 2-phosphoglycerate and 3-phosphoglycerate. This Archaeoglobus fulgidus (strain ATCC 49558 / DSM 4304 / JCM 9628 / NBRC 100126 / VC-16) protein is 2,3-bisphosphoglycerate-independent phosphoglycerate mutase 1 (apgM1).